Reading from the N-terminus, the 85-residue chain is Putative defensin-like protein 142 (85 aa).

An N-terminal signal peptide occupies residues 1 to 24; that stretch reads MKKSFLFTFTVLTIFTILVIGVAP. Intrachain disulfides connect Cys-30/Cys-78, Cys-41/Cys-63, Cys-46/Cys-73, and Cys-50/Cys-75.

The protein belongs to the DEFL family.

It localises to the secreted. This chain is Putative defensin-like protein 142 (LCR34), found in Arabidopsis thaliana (Mouse-ear cress).